The following is a 117-amino-acid chain: Ribonuclease P protein component (117 aa).

Belongs to the RnpA family. As to quaternary structure, consists of a catalytic RNA component (M1 or rnpB) and a protein subunit.

The catalysed reaction is Endonucleolytic cleavage of RNA, removing 5'-extranucleotides from tRNA precursor.. Its function is as follows. RNaseP catalyzes the removal of the 5'-leader sequence from pre-tRNA to produce the mature 5'-terminus. It can also cleave other RNA substrates such as 4.5S RNA. The protein component plays an auxiliary but essential role in vivo by binding to the 5'-leader sequence and broadening the substrate specificity of the ribozyme. In Thermotoga maritima (strain ATCC 43589 / DSM 3109 / JCM 10099 / NBRC 100826 / MSB8), this protein is Ribonuclease P protein component.